We begin with the raw amino-acid sequence, 545 residues long: Signal peptide peptidase-like 4 (545 aa).

An N-terminal signal peptide occupies residues 1-25 (MGTSSPEMAAALLLVMAALAGVAAG). Residues 26–193 (GDIVHQDDEA…PDRPLVDTAE (168 aa)) are Lumenal-facing. N-linked (GlcNAc...) asparagine glycosylation is found at Asn81 and Asn147. Positions 90 to 170 (PIDCCDPPTQ…PKDAGNDLQK (81 aa)) constitute a PA domain. A helical transmembrane segment spans residues 194-214 (VFLWLMAVGTILCASYWSAWS). At 215–246 (AREAVIEQEKLLKDGHESSLNLEAGGSSGMVD) the chain is on the cytoplasmic side. The chain crosses the membrane as a helical span at residues 247 to 267 (INMTSAILFVVIASCFLIMLY). Residues 268–276 (KLMSHWFVE) are Lumenal-facing. Residues 277–297 (LLVVIFCIGGVEGLQTCLVAL) traverse the membrane as a helical segment. Residues 298 to 317 (LSRWFKPAAESFVKVPFFGA) are Cytoplasmic-facing. The helical transmembrane segment at 318 to 338 (VSYLTIAVCPFCIVFAVIWAV) threads the bilayer. Topologically, residues 339 to 343 (YRRMT) are lumenal. The helical transmembrane segment at 344 to 364 (YAWIGQDILGIALIVTVIQIV) threads the bilayer. Over 365-373 (RIPNLKVGS) the chain is Cytoplasmic. A helical transmembrane segment spans residues 374–394 (VLLSCSFLYDIFWVFISKMWF). Asp383 is an active-site residue. Residues 395–427 (HESVMIVVARGDKTDEDGVPMLLKIPRMFDPWG) are Lumenal-facing. Residues 428–448 (GFSIIGFGDILLPGLLIAFAL) form a helical membrane-spanning segment. Residue Asp436 is part of the active site. Over 449 to 460 (RYDWAAKKTLQS) the chain is Cytoplasmic. The chain crosses the membrane as a helical span at residues 461 to 481 (GYFLWSMVAYGSGLMITYVAL). The Lumenal portion of the chain corresponds to 482-485 (NLMD). A helical membrane pass occupies residues 486–506 (GHGQPALLYIVPFTLGTFIAL). Residues 490-492 (PAL) carry the PAL motif. At 507 to 545 (GRKRGELRNLWTRGQPERVCTHMHMQPSPKDTNCDAVSS) the chain is on the cytoplasmic side.

It belongs to the peptidase A22B family. Glycosylated.

The protein resides in the endosome membrane. Its function is as follows. Intramembrane-cleaving aspartic protease (I-CLiP) that cleaves type II membrane signal peptides in the hydrophobic plane of the membrane. This is Signal peptide peptidase-like 4 (SPPL4) from Oryza sativa subsp. japonica (Rice).